Consider the following 203-residue polypeptide: Dual-action ribosomal maturation protein DarP (203 aa).

Residues 1–13 (MQPMTRNSRNSPG) show a composition bias toward polar residues. The disordered stretch occupies residues 1-39 (MQPMTRNSRNSPGSRFPGAFAPEPDMDEPKSKSQKKRDM). Basic and acidic residues predominate over residues 27 to 39 (DEPKSKSQKKRDM).

Belongs to the DarP family.

Its subcellular location is the cytoplasm. In terms of biological role, member of a network of 50S ribosomal subunit biogenesis factors which assembles along the 30S-50S interface, preventing incorrect 23S rRNA structures from forming. Promotes peptidyl transferase center (PTC) maturation. This Cupriavidus pinatubonensis (strain JMP 134 / LMG 1197) (Cupriavidus necator (strain JMP 134)) protein is Dual-action ribosomal maturation protein DarP.